The chain runs to 544 residues: Fructose dehydrogenase large subunit (544 aa).

Position 14-30 (14-30) interacts with FAD; sequence GAGICGSLLAHKLVRNG. The Proton acceptor role is filled by His478.

It belongs to the GMC oxidoreductase family. In terms of assembly, heterotrimer composed of FdhL, FdhS and FdhC. Requires FAD as cofactor.

It is found in the cell membrane. The enzyme catalyses keto-D-fructose + a ubiquinone = 5-dehydro-D-fructose + a ubiquinol. In terms of biological role, catalytic subunit of fructose dehydrogenase, an enzyme that catalyzes the oxidation of D-fructose to produce 5-keto-D-fructose. This is Fructose dehydrogenase large subunit (fdhL) from Gluconobacter japonicus.